The following is a 184-amino-acid chain: ATP synthase subunit delta (184 aa).

It belongs to the ATPase delta chain family. In terms of assembly, F-type ATPases have 2 components, F(1) - the catalytic core - and F(0) - the membrane proton channel. F(1) has five subunits: alpha(3), beta(3), gamma(1), delta(1), epsilon(1). F(0) has three main subunits: a(1), b(2) and c(10-14). The alpha and beta chains form an alternating ring which encloses part of the gamma chain. F(1) is attached to F(0) by a central stalk formed by the gamma and epsilon chains, while a peripheral stalk is formed by the delta and b chains.

The protein resides in the cell membrane. Its function is as follows. F(1)F(0) ATP synthase produces ATP from ADP in the presence of a proton or sodium gradient. F-type ATPases consist of two structural domains, F(1) containing the extramembraneous catalytic core and F(0) containing the membrane proton channel, linked together by a central stalk and a peripheral stalk. During catalysis, ATP synthesis in the catalytic domain of F(1) is coupled via a rotary mechanism of the central stalk subunits to proton translocation. This protein is part of the stalk that links CF(0) to CF(1). It either transmits conformational changes from CF(0) to CF(1) or is implicated in proton conduction. The chain is ATP synthase subunit delta from Bacillus licheniformis (strain ATCC 14580 / DSM 13 / JCM 2505 / CCUG 7422 / NBRC 12200 / NCIMB 9375 / NCTC 10341 / NRRL NRS-1264 / Gibson 46).